The following is a 123-amino-acid chain: Gamma-synuclein (123 aa).

2 repeat units span residues 20-30 (EKTKQGVTEAA) and 31-41 (EKTKEGVMYVG). The segment at 20 to 67 (EKTKQGVTEAAEKTKEGVMYVGTKTKGERGTSVTSVAEKTKEQANAVS) is 4 X 11 AA tandem repeats of [EGSA]-K-T-K-[EQ]-[GQ]-V-X(4). The 3; approximate repeat unit spans residues 42-56 (TKTKGERGTSVTSVA). Repeat 4 spans residues 57–67 (EKTKEQANAVS). A phosphoserine mark is found at Ser67 and Ser72. The tract at residues 93 to 123 (GVVRKEDLEPPAQDQEAKEQEEGEEAKSGGD) is disordered. Residues 107–123 (QEAKEQEEGEEAKSGGD) are compositionally biased toward basic and acidic residues. Ser120 is modified (phosphoserine; by BARK1, CaMK2 and CK2).

The protein belongs to the synuclein family. In terms of assembly, may be a centrosome-associated protein. Interacts with MYOC; affects its secretion and its aggregation. Phosphorylated. Phosphorylation by GRK5 appears to occur on residues distinct from the residue phosphorylated by other kinases. As to expression, specifically expressed in the peripheral nervous system. High expression in motoneurons of the brainstem. Also found in neurons of many other brain regions including the cerebellar cortex, thalamus, hypothalamus and CA1, CA2, CA3 and CA4 regions of the hippocampus.

The protein resides in the cytoplasm. It is found in the perinuclear region. The protein localises to the cytoskeleton. Its subcellular location is the microtubule organizing center. It localises to the centrosome. The protein resides in the spindle. Its function is as follows. Plays a role in neurofilament network integrity. May be involved in modulating axonal architecture during development and in the adult. In vitro, increases the susceptibility of neurofilament-H to calcium-dependent proteases. May also function in modulating the keratin network in skin. Activates the MAPK and Elk-1 signal transduction pathway. This chain is Gamma-synuclein (Sncg), found in Rattus norvegicus (Rat).